A 552-amino-acid polypeptide reads, in one-letter code: Tyrosine-protein kinase Src64B (552 aa).

Residues Val-95–Ser-156 form the SH3 domain. In terms of domain architecture, SH2 spans Trp-162–Cys-259. The Protein kinase domain maps to Ile-284–Glu-537. ATP-binding positions include Leu-290–Val-298 and Lys-312. Asp-404 serves as the catalytic Proton acceptor. The residue at position 434 (Tyr-434) is a Phosphotyrosine; by autocatalysis.

The protein belongs to the protein kinase superfamily. Tyr protein kinase family. SRC subfamily. Interacts with hzg. Post-translationally, phosphorylated. In terms of tissue distribution, after the first 8 hours of development, accumulates almost exclusively in neural tissues such as the brain, ventral nerve chord, and eye-antennal disks, and in differentiating smooth muscle.

The enzyme catalyses L-tyrosyl-[protein] + ATP = O-phospho-L-tyrosyl-[protein] + ADP + H(+). Functionally, tyrosine-protein kinase that may play a role in the development of neural tissue and smooth muscle. May contribute to tyrosine phosphorylation of Dscam1, a cell surface receptor involved in targeting of growing axons during eye morphogenesis. The polypeptide is Tyrosine-protein kinase Src64B (Src64B) (Drosophila melanogaster (Fruit fly)).